We begin with the raw amino-acid sequence, 454 residues long: tRNA modification GTPase MnmE (454 aa).

(6S)-5-formyl-5,6,7,8-tetrahydrofolate-binding residues include R23, E80, and K120. Residues 216–377 (GMKVVIAGRP…LRNHLKQSMG (162 aa)) enclose the TrmE-type G domain. N226 lines the K(+) pocket. GTP-binding positions include 226–231 (NAGKSS), 245–251 (TDIAGTT), 270–273 (DTAG), and 335–338 (NKAD). S230 contributes to the Mg(2+) binding site. T245, I247, and T250 together coordinate K(+). A Mg(2+)-binding site is contributed by T251. K454 contacts (6S)-5-formyl-5,6,7,8-tetrahydrofolate.

Belongs to the TRAFAC class TrmE-Era-EngA-EngB-Septin-like GTPase superfamily. TrmE GTPase family. Homodimer. Heterotetramer of two MnmE and two MnmG subunits. Requires K(+) as cofactor.

It is found in the cytoplasm. Exhibits a very high intrinsic GTPase hydrolysis rate. Involved in the addition of a carboxymethylaminomethyl (cmnm) group at the wobble position (U34) of certain tRNAs, forming tRNA-cmnm(5)s(2)U34. In Escherichia coli O157:H7, this protein is tRNA modification GTPase MnmE.